A 103-amino-acid chain; its full sequence is uncharacterized protein (103 aa).

This is an uncharacterized protein from Archaeoglobus fulgidus (strain ATCC 49558 / DSM 4304 / JCM 9628 / NBRC 100126 / VC-16).